Reading from the N-terminus, the 253-residue chain is Ciliary microtubule associated protein 1B (253 aa).

An STPGR repeat occupies Pro182–Arg207.

The protein belongs to the CIMAP family.

It is found in the cell projection. Its subcellular location is the cilium. It localises to the flagellum. This chain is Ciliary microtubule associated protein 1B, found in Homo sapiens (Human).